A 400-amino-acid polypeptide reads, in one-letter code: S-adenosylmethionine synthase (400 aa).

Residue 136 to 141 participates in ATP binding; the sequence is GTGSTD.

Belongs to the AdoMet synthase 2 family. Mg(2+) serves as cofactor.

The enzyme catalyses L-methionine + ATP + H2O = S-adenosyl-L-methionine + phosphate + diphosphate. The protein operates within amino-acid biosynthesis; S-adenosyl-L-methionine biosynthesis; S-adenosyl-L-methionine from L-methionine: step 1/1. Its function is as follows. Catalyzes the formation of S-adenosylmethionine from methionine and ATP. This Methanoregula boonei (strain DSM 21154 / JCM 14090 / 6A8) protein is S-adenosylmethionine synthase.